Here is a 544-residue protein sequence, read N- to C-terminus: Chaperonin GroEL (544 aa).

Residues 30–33 (TLGP), Lys51, 87–91 (DGTTT), Gly415, 479–481 (NAA), and Asp495 each bind ATP. Residues 525-537 (PQDTPATAAAPDM) show a composition bias toward low complexity. The disordered stretch occupies residues 525-544 (PQDTPATAAAPDMGGMGGMM).

This sequence belongs to the chaperonin (HSP60) family. In terms of assembly, forms a cylinder of 14 subunits composed of two heptameric rings stacked back-to-back. Interacts with the co-chaperonin GroES.

The protein resides in the cytoplasm. It carries out the reaction ATP + H2O + a folded polypeptide = ADP + phosphate + an unfolded polypeptide.. Together with its co-chaperonin GroES, plays an essential role in assisting protein folding. The GroEL-GroES system forms a nano-cage that allows encapsulation of the non-native substrate proteins and provides a physical environment optimized to promote and accelerate protein folding. The sequence is that of Chaperonin GroEL from Ruthia magnifica subsp. Calyptogena magnifica.